The sequence spans 146 residues: MTFVSDLFAIALGGSIGAVLRYLITLTVVSAPLSGWLTLHGSVGTTLANLLGCCALGGLFQFSQALVASDWVATGWAASLAHPRTLLAVRIGVLGSLTTFSTLIGETAVFASQGRILASSMLLGINVIAGWCLFWAAAAVVRNWTS.

Transmembrane regions (helical) follow at residues 8 to 28 (FAIA…TLTV), 47 to 67 (LANL…QALV), 91 to 111 (IGVL…AVFA), and 121 to 141 (MLLG…AAVV). Na(+) is bound by residues G95 and T98.

Belongs to the fluoride channel Fluc/FEX (TC 1.A.43) family.

The protein resides in the cell inner membrane. The catalysed reaction is fluoride(in) = fluoride(out). Its activity is regulated as follows. Na(+) is not transported, but it plays an essential structural role and its presence is essential for fluoride channel function. Its function is as follows. Fluoride-specific ion channel. Important for reducing fluoride concentration in the cell, thus reducing its toxicity. This Rhodopirellula baltica (strain DSM 10527 / NCIMB 13988 / SH1) protein is Fluoride-specific ion channel FluC.